The sequence spans 119 residues: Large ribosomal subunit protein uL18 (119 aa).

The protein belongs to the universal ribosomal protein uL18 family. Part of the 50S ribosomal subunit; part of the 5S rRNA/L5/L18/L25 subcomplex. Contacts the 5S and 23S rRNAs.

In terms of biological role, this is one of the proteins that bind and probably mediate the attachment of the 5S RNA into the large ribosomal subunit, where it forms part of the central protuberance. This is Large ribosomal subunit protein uL18 from Xanthomonas oryzae pv. oryzae (strain MAFF 311018).